A 261-amino-acid chain; its full sequence is Type II restriction enzyme Sau96I (261 aa).

As to quaternary structure, monomer.

The enzyme catalyses Endonucleolytic cleavage of DNA to give specific double-stranded fragments with terminal 5'-phosphates.. Functionally, a P subtype restriction enzyme that recognizes the double-stranded sequence 5'-GGNCC-3' and cleaves after G-1. This Staphylococcus aureus protein is Type II restriction enzyme Sau96I.